Here is a 456-residue protein sequence, read N- to C-terminus: tRNA modification GTPase MnmE (456 aa).

(6S)-5-formyl-5,6,7,8-tetrahydrofolate is bound by residues R25, E87, and R126. The region spanning 221 to 377 (GLKVAIVGQP…LENAIIEQVN (157 aa)) is the TrmE-type G domain. Residue N231 coordinates K(+). Residues 231-236 (NVGKSS), 250-256 (TDLPGTT), and 275-278 (DTAG) contribute to the GTP site. S235 is a binding site for Mg(2+). K(+) is bound by residues T250, L252, and T255. Residue T256 coordinates Mg(2+). Residue K456 participates in (6S)-5-formyl-5,6,7,8-tetrahydrofolate binding.

It belongs to the TRAFAC class TrmE-Era-EngA-EngB-Septin-like GTPase superfamily. TrmE GTPase family. As to quaternary structure, homodimer. Heterotetramer of two MnmE and two MnmG subunits. It depends on K(+) as a cofactor.

The protein localises to the cytoplasm. Functionally, exhibits a very high intrinsic GTPase hydrolysis rate. Involved in the addition of a carboxymethylaminomethyl (cmnm) group at the wobble position (U34) of certain tRNAs, forming tRNA-cmnm(5)s(2)U34. This is tRNA modification GTPase MnmE from Synechocystis sp. (strain ATCC 27184 / PCC 6803 / Kazusa).